The following is a 159-amino-acid chain: UPF0336 protein ML1910 (159 aa).

Belongs to the UPF0336 family.

The protein is UPF0336 protein ML1910 of Mycobacterium leprae (strain TN).